Consider the following 196-residue polypeptide: Large ribosomal subunit protein eL15 (196 aa).

Over residues 162–172 (RGKTSAGRRAR) the composition is skewed to basic residues. The tract at residues 162 to 196 (RGKTSAGRRARGLQNRGKGTEGLRPSTNADKRNKS) is disordered.

This sequence belongs to the eukaryotic ribosomal protein eL15 family.

The protein is Large ribosomal subunit protein eL15 of Halobacterium salinarum (strain ATCC 29341 / DSM 671 / R1).